The primary structure comprises 258 residues: MLRKVFAVVSVLLVVSAAKVTKLVLDDHYVNRVVGGEVAKNGSAPYQVSLQVPGWGHNCGGSLLNNRWVLTAAHCLVGYEPSDLMVLVGTNSLKEGGELLKVDKLLYHSRYNRPQFHNDIGLMRLEQPVQFSELVQSVEYLEKAVPVNATVRLTGWGRTSTNGNVPTLLQSLNVVTLSNEDCKAKMGNPKNVDLGHVCTLTKAGEGACNGDSGGPLVYEGKLVGVVNFGVPCGRGFPDGFARVSYYHEWVRTTMANNS.

An N-terminal signal peptide occupies residues 1 to 17 (MLRKVFAVVSVLLVVSA). A propeptide spans 18–32 (AKVTKLVLDDHYVNR) (activation peptide). Residues 33–255 (VVGGEVAKNG…YHEWVRTTMA (223 aa)) enclose the Peptidase S1 domain. Residues C59 and C75 are joined by a disulfide bond. Active-site charge relay system residues include H74 and D119. 2 disulfides stabilise this stretch: C182–C198 and C208–C232. S212 acts as the Charge relay system in catalysis.

Belongs to the peptidase S1 family. In terms of tissue distribution, after blood feeding, expression is induced in the midgut epithelium, followed by secretion into the midgut lumen.

It localises to the secreted. The catalysed reaction is Preferential cleavage: Tyr-|-Xaa, Trp-|-Xaa, Phe-|-Xaa, Leu-|-Xaa.. This Anopheles gambiae (African malaria mosquito) protein is Chymotrypsin-2 (CHYM2).